A 361-amino-acid chain; its full sequence is Phospho-N-acetylmuramoyl-pentapeptide-transferase (361 aa).

Helical transmembrane passes span 25-45, 71-91, 94-114, 133-153, 169-189, 200-220, 240-260, 264-284, 289-309, and 338-358; these read TGGAMVTGALFVFLCGPWIID, TPTMGGLMVLSGLVVGTVLWA, LNPYVWIVLAVTLGFGFVGFY, WRLLIEAVIAAAACYALVRLG, VAINLGWFFVGFGAFIVVGAG, GLAIVPVMIAAASFGLISYLA, LSVLCGALLGAGLGFLWFNAP, IFMGDTGSLALGGMLGSIAVA, IVLAVIGGLFVLEAVSVIVQV, and QIVIRFWIIAVMLALAGLSTL.

It belongs to the glycosyltransferase 4 family. MraY subfamily. Requires Mg(2+) as cofactor.

The protein localises to the cell inner membrane. The catalysed reaction is UDP-N-acetyl-alpha-D-muramoyl-L-alanyl-gamma-D-glutamyl-meso-2,6-diaminopimeloyl-D-alanyl-D-alanine + di-trans,octa-cis-undecaprenyl phosphate = di-trans,octa-cis-undecaprenyl diphospho-N-acetyl-alpha-D-muramoyl-L-alanyl-D-glutamyl-meso-2,6-diaminopimeloyl-D-alanyl-D-alanine + UMP. The protein operates within cell wall biogenesis; peptidoglycan biosynthesis. In terms of biological role, catalyzes the initial step of the lipid cycle reactions in the biosynthesis of the cell wall peptidoglycan: transfers peptidoglycan precursor phospho-MurNAc-pentapeptide from UDP-MurNAc-pentapeptide onto the lipid carrier undecaprenyl phosphate, yielding undecaprenyl-pyrophosphoryl-MurNAc-pentapeptide, known as lipid I. This is Phospho-N-acetylmuramoyl-pentapeptide-transferase from Rhodopseudomonas palustris (strain BisB18).